We begin with the raw amino-acid sequence, 527 residues long: Bifunctional purine biosynthesis protein PurH (527 aa).

The region spanning 1–149 (MTADLLPVRR…KNFARVAVAT (149 aa)) is the MGS-like domain.

It belongs to the PurH family.

It catalyses the reaction (6R)-10-formyltetrahydrofolate + 5-amino-1-(5-phospho-beta-D-ribosyl)imidazole-4-carboxamide = 5-formamido-1-(5-phospho-D-ribosyl)imidazole-4-carboxamide + (6S)-5,6,7,8-tetrahydrofolate. The catalysed reaction is IMP + H2O = 5-formamido-1-(5-phospho-D-ribosyl)imidazole-4-carboxamide. It participates in purine metabolism; IMP biosynthesis via de novo pathway; 5-formamido-1-(5-phospho-D-ribosyl)imidazole-4-carboxamide from 5-amino-1-(5-phospho-D-ribosyl)imidazole-4-carboxamide (10-formyl THF route): step 1/1. Its pathway is purine metabolism; IMP biosynthesis via de novo pathway; IMP from 5-formamido-1-(5-phospho-D-ribosyl)imidazole-4-carboxamide: step 1/1. The sequence is that of Bifunctional purine biosynthesis protein PurH from Stenotrophomonas maltophilia (strain R551-3).